A 301-amino-acid chain; its full sequence is Ribosomal RNA small subunit methyltransferase H (301 aa).

Residues 33 to 35 (GGH), aspartate 52, phenylalanine 79, aspartate 100, and glutamine 107 each bind S-adenosyl-L-methionine.

Belongs to the methyltransferase superfamily. RsmH family.

The protein localises to the cytoplasm. It catalyses the reaction cytidine(1402) in 16S rRNA + S-adenosyl-L-methionine = N(4)-methylcytidine(1402) in 16S rRNA + S-adenosyl-L-homocysteine + H(+). In terms of biological role, specifically methylates the N4 position of cytidine in position 1402 (C1402) of 16S rRNA. In Mycoplasmopsis synoviae (strain 53) (Mycoplasma synoviae), this protein is Ribosomal RNA small subunit methyltransferase H.